We begin with the raw amino-acid sequence, 193 residues long: Non-specific lipid transfer protein GPI-anchored 2 (193 aa).

Positions 1–22 are cleaved as a signal peptide; that stretch reads MSNVVVIAVVLIVASLTGHVSA. 4 cysteine pairs are disulfide-bonded: C38–C83, C48–C67, C68–C110, and C81–C120. A glycan (N-linked (GlcNAc...) asparagine) is linked at N44. The tract at residues 143 to 164 is disordered; that stretch reads APGSMSGAESPGGFGSGPSASR. G165 carries the GPI-anchor amidated glycine lipid modification. Residues 166–193 constitute a propeptide, removed in mature form; sequence SDAPSSAPYSLFLNLIIFPLAFAFYIFC.

Belongs to the plant LTP family. O-glycosylated on hydroxyprolines; noncontiguous hydroxylproline residues are glycosylated with arabinogalactan. In terms of tissue distribution, up-regulated in the epidermis of top stems. Expressed in roots, cotyledons, seedlings, leaves, stems, buds, flower and silique walls. Preferentially expressed in the shoot apical meristem and the root meristem. Also detected in expanding leaves and petals, developing flowers, and elongating pistils, stamens and siliques.

The protein resides in the cell membrane. Functionally, lipid transfer protein that, together with LTPG1, binds to lipids and functions as a component of the cuticular lipid export machinery that performs extensive export of intracellular lipids (e.g. C29 alkane) from epidermal cells to the surface to build the cuticular wax layer and silique walls. Contributes to pre-invasive defense against some non-host powdery mildew pathogens by preventing the penetration of the epidermal cell wall by the fungal agents (e.g. Blumeria graminis f. sp. hordei (Bgh)). Involved in seed and ovule maturation and development, probably by regulating the fatty acids homeostasis during suberin and sporopollenin biosynthesis or deposition. In Arabidopsis thaliana (Mouse-ear cress), this protein is Non-specific lipid transfer protein GPI-anchored 2.